A 403-amino-acid chain; its full sequence is Tubby-like F-box protein 6 (403 aa).

The 56-residue stretch at 50–105 folds into the F-box domain; that stretch reads SCWAQLPPELLREVLVRIEESEVWWPSRRDVVACAGVCRSWRGITKEIVRVPEASG.

Belongs to the TUB family. As to expression, ubiquitous.

The chain is Tubby-like F-box protein 6 (TULP6) from Oryza sativa subsp. japonica (Rice).